Consider the following 74-residue polypeptide: Protein krueppel (74 aa).

4 C2H2-type zinc fingers span residues 1–4 (ERTH), 10–32 (FECPECHKRFTRDHHLKTHMRLH), 38–60 (YHCSHCDRQFVQVANLRRHLRVH), and 66–74 (YTCEICDGK).

Belongs to the krueppel C2H2-type zinc-finger protein family.

Its subcellular location is the nucleus. Krueppel is a gap class segmentation protein. In Musca domestica (House fly), this protein is Protein krueppel (Kr).